The sequence spans 405 residues: Pyruvate decarboxylase 2 (405 aa).

A thiamine pyrophosphate binding region spans residues 232–314 (DSWFNCQKLK…FLINNGGYTI (83 aa)). Mg(2+)-binding residues include Asp-282, Asn-309, and Gly-311. Glu-315 is a binding site for substrate.

This sequence belongs to the TPP enzyme family. As to quaternary structure, homotetramer. A metal cation is required as a cofactor. It depends on thiamine diphosphate as a cofactor.

It carries out the reaction a 2-oxocarboxylate + H(+) = an aldehyde + CO2. The polypeptide is Pyruvate decarboxylase 2 (PDC2) (Pisum sativum (Garden pea)).